Consider the following 175-residue polypeptide: Protein-export protein SecB (175 aa).

It belongs to the SecB family. Homotetramer, a dimer of dimers. One homotetramer interacts with 1 SecA dimer.

It is found in the cytoplasm. One of the proteins required for the normal export of preproteins out of the cell cytoplasm. It is a molecular chaperone that binds to a subset of precursor proteins, maintaining them in a translocation-competent state. It also specifically binds to its receptor SecA. This is Protein-export protein SecB from Anaplasma marginale (strain Florida).